The primary structure comprises 718 residues: Heat shock 70 kDa protein 6, chloroplastic (718 aa).

The N-terminal 92 residues, 1–92 (MASSAAQIHV…IDLGTTNSAV (92 aa)), are a transit peptide targeting the chloroplast. Positions 671-718 (QSLYNQPGAGGPGAGPSPGGEGASSGDSSSSKGGDGDDVIDADFTDSQ) are disordered. The span at 678 to 693 (GAGGPGAGPSPGGEGA) shows a compositional bias: gly residues. Positions 706–718 (GDDVIDADFTDSQ) are enriched in acidic residues.

It belongs to the heat shock protein 70 (TC 1.A.33) family. DnaK subfamily. In terms of assembly, interacts with geminivirus movement protein (MP).

The protein resides in the plastid. The protein localises to the chloroplast stroma. In terms of biological role, acts redundantly with HSP70-7 in the thermotolerance of germinating seeds. Plays an important role in the protein precursor import into chloroplasts. Functionally, in cooperation with other chaperones, Hsp70s are key components that facilitate folding of de novo synthesized proteins, assist translocation of precursor proteins into organelles, and are responsible for degradation of damaged protein under stress conditions. The sequence is that of Heat shock 70 kDa protein 6, chloroplastic (HSP70-6) from Arabidopsis thaliana (Mouse-ear cress).